The sequence spans 144 residues: Transcriptional regulator MraZ (144 aa).

2 SpoVT-AbrB domains span residues 5 to 47 (EYQY…PLDR) and 76 to 121 (AHKT…SQER).

Belongs to the MraZ family. As to quaternary structure, forms oligomers.

It is found in the cytoplasm. The protein localises to the nucleoid. The chain is Transcriptional regulator MraZ from Thermus thermophilus (strain ATCC BAA-163 / DSM 7039 / HB27).